The primary structure comprises 263 residues: Endonuclease 8 (263 aa).

The active-site Schiff-base intermediate with DNA is the Pro2. The active-site Proton donor is the Glu3. Lys53 (proton donor; for beta-elimination activity) is an active-site residue. Residues Gln70, Arg125, and Asn169 each coordinate DNA. The segment at 229–263 (KVFHREGKACERCGGVIERSTLSSRPFYGCPVCQK) adopts an FPG-type zinc-finger fold. The active-site Proton donor; for delta-elimination activity is Arg253.

It belongs to the FPG family. Zn(2+) is required as a cofactor.

It catalyses the reaction 2'-deoxyribonucleotide-(2'-deoxyribose 5'-phosphate)-2'-deoxyribonucleotide-DNA = a 3'-end 2'-deoxyribonucleotide-(2,3-dehydro-2,3-deoxyribose 5'-phosphate)-DNA + a 5'-end 5'-phospho-2'-deoxyribonucleoside-DNA + H(+). In terms of biological role, involved in base excision repair of DNA damaged by oxidation or by mutagenic agents. Acts as a DNA glycosylase that recognizes and removes damaged bases. Has a preference for oxidized pyrimidines, such as thymine glycol, 5,6-dihydrouracil and 5,6-dihydrothymine. Has AP (apurinic/apyrimidinic) lyase activity and introduces nicks in the DNA strand. Cleaves the DNA backbone by beta-delta elimination to generate a single-strand break at the site of the removed base with both 3'- and 5'-phosphates. The sequence is that of Endonuclease 8 from Enterobacter sp. (strain 638).